Here is a 158-residue protein sequence, read N- to C-terminus: MTNGNGTPPEAAAPPQLNVLAQYTKDLSFENPNAPASLAPQQSQPAINIQINVGANNLAENEFEVTLSIEGKAESGSTVLFSFELAYAGVFRIVNVPQENLHPLIMIECPRLLFPFAREIIASAVRDGGFPPLMLDPVDFVGLYRQNLERAQQQGQPS.

It belongs to the SecB family. As to quaternary structure, homotetramer, a dimer of dimers. One homotetramer interacts with 1 SecA dimer.

It is found in the cytoplasm. One of the proteins required for the normal export of preproteins out of the cell cytoplasm. It is a molecular chaperone that binds to a subset of precursor proteins, maintaining them in a translocation-competent state. It also specifically binds to its receptor SecA. In Rhodopseudomonas palustris (strain HaA2), this protein is Protein-export protein SecB.